A 353-amino-acid polypeptide reads, in one-letter code: Photosystem II protein D1 (353 aa).

Position 2 is an N-acetylthreonine (T2). Phosphothreonine is present on T2. The next 3 helical transmembrane spans lie at 29–46 (YIGW…TATS), 118–133 (HFLL…EWEL), and 142–156 (WIAV…AATA). H118 contacts chlorophyll a. Y126 contributes to the pheophytin a binding site. [CaMn4O5] cluster-binding residues include D170 and E189. A helical membrane pass occupies residues 197–218 (FHMLGVAGVFGGSLFSAMHGSL). H198 contacts chlorophyll a. A quinone is bound by residues H215 and 264 to 265 (SF). H215 is a binding site for Fe cation. Residue H272 coordinates Fe cation. The chain crosses the membrane as a helical span at residues 274 to 288 (FLAAWPVVCIWFTAL). Positions 332, 333, 342, and 344 each coordinate [CaMn4O5] cluster. The propeptide occupies 345–353 (SVDAPAVQG).

This sequence belongs to the reaction center PufL/M/PsbA/D family. PSII is composed of 1 copy each of membrane proteins PsbA, PsbB, PsbC, PsbD, PsbE, PsbF, PsbH, PsbI, PsbJ, PsbK, PsbL, PsbM, PsbT, PsbX, PsbY, PsbZ, Psb30/Ycf12, at least 3 peripheral proteins of the oxygen-evolving complex and a large number of cofactors. It forms dimeric complexes. The cofactor is The D1/D2 heterodimer binds P680, chlorophylls that are the primary electron donor of PSII, and subsequent electron acceptors. It shares a non-heme iron and each subunit binds pheophytin, quinone, additional chlorophylls, carotenoids and lipids. D1 provides most of the ligands for the Mn4-Ca-O5 cluster of the oxygen-evolving complex (OEC). There is also a Cl(-1) ion associated with D1 and D2, which is required for oxygen evolution. The PSII complex binds additional chlorophylls, carotenoids and specific lipids.. Tyr-161 forms a radical intermediate that is referred to as redox-active TyrZ, YZ or Y-Z. In terms of processing, C-terminally processed by CTPA; processing is essential to allow assembly of the oxygen-evolving complex and thus photosynthetic growth.

Its subcellular location is the plastid. It localises to the chloroplast thylakoid membrane. It catalyses the reaction 2 a plastoquinone + 4 hnu + 2 H2O = 2 a plastoquinol + O2. Photosystem II (PSII) is a light-driven water:plastoquinone oxidoreductase that uses light energy to abstract electrons from H(2)O, generating O(2) and a proton gradient subsequently used for ATP formation. It consists of a core antenna complex that captures photons, and an electron transfer chain that converts photonic excitation into a charge separation. The D1/D2 (PsbA/PsbD) reaction center heterodimer binds P680, the primary electron donor of PSII as well as several subsequent electron acceptors. In Nephroselmis olivacea (Green alga), this protein is Photosystem II protein D1.